The primary structure comprises 428 residues: Dihydroorotase (428 aa).

Zn(2+) is bound by residues histidine 59 and histidine 61. Substrate contacts are provided by residues 61–63 and asparagine 93; that span reads HLR. Aspartate 151, histidine 178, and histidine 231 together coordinate Zn(2+). Asparagine 277 lines the substrate pocket. Residue aspartate 304 participates in Zn(2+) binding. Aspartate 304 is an active-site residue. Residues histidine 308 and 322 to 323 contribute to the substrate site; that span reads FG.

This sequence belongs to the metallo-dependent hydrolases superfamily. DHOase family. Class I DHOase subfamily. Zn(2+) serves as cofactor.

The enzyme catalyses (S)-dihydroorotate + H2O = N-carbamoyl-L-aspartate + H(+). Its pathway is pyrimidine metabolism; UMP biosynthesis via de novo pathway; (S)-dihydroorotate from bicarbonate: step 3/3. Functionally, catalyzes the reversible cyclization of carbamoyl aspartate to dihydroorotate. This Bacillus cytotoxicus (strain DSM 22905 / CIP 110041 / 391-98 / NVH 391-98) protein is Dihydroorotase.